The chain runs to 229 residues: Transmembrane emp24 domain-containing protein 5 (229 aa).

A signal peptide spans 1–27 (MGDKIWLPFPVLLLAALPPVLLPGAAG). Residues 28-196 (FTPSLDSDFT…IQESNFDRVN (169 aa)) are Lumenal-facing. Residues 45–126 (KECFYQPMPL…EKVIFFELIL (82 aa)) enclose the GOLD domain. Residues 197-217 (FWSMVNLVVMVVVSAIQVYML) traverse the membrane as a helical segment. Residues 218–229 (KSLFEDKRKSRT) are Cytoplasmic-facing.

This sequence belongs to the EMP24/GP25L family. In terms of assembly, interacts with TMED9 and TMED10.

The protein resides in the endoplasmic reticulum membrane. Its subcellular location is the golgi apparatus. It is found in the cis-Golgi network membrane. The protein localises to the endoplasmic reticulum-Golgi intermediate compartment membrane. Functionally, potential role in vesicular protein trafficking, mainly in the early secretory pathway. Required for the maintenance of the Golgi apparatus; involved in protein exchange between Golgi stacks during assembly. Probably not required for COPI-vesicle-mediated retrograde transport. This chain is Transmembrane emp24 domain-containing protein 5 (TMED5), found in Homo sapiens (Human).